Consider the following 554-residue polypeptide: Calcium-dependent protein kinase 3 (554 aa).

Positions 30 to 55 are disordered; the sequence is KKKSSNKSIKSQHKFEGSKIANKNNE. Residues 110 to 365 enclose the Protein kinase domain; that stretch reads NLSEEPLGKG…ASEALKHPWF (256 aa). ATP-binding positions include 116–124 and K139; that span reads LGKGTYGCV. D230 functions as the Proton acceptor in the catalytic mechanism. The short motif at 385-393 is the J domain autoinhibitory motif element; the sequence is NFKNYALLL. The j domain stretch occupies residues 385-420; that stretch reads NFKNYALLLKLQKLAMTIIAQQSNDYDLQQLKTVFL. The J domain EF-hand interaction motif signature appears at 394–403; it reads KLQKLAMTII. 4 EF-hand domains span residues 410–445, 448–479, 480–515, and 521–554; these read YDLQQLKTVFLYLDEDGKGNITKNQLKKGLENSGLK, QNFDVLLDQIDSDGSGRIDYTEFLAAALDRKH, LSKKLIYCAFRVFDVDNDGEITTAELAHILYNGNKK, and KDVNQVKKMIQEVDKNNDGKIDFYEFCEMMKLKY. 15 residues coordinate Ca(2+): D458, D460, S462, R464, E469, D493, D495, D497, E499, E504, D534, N536, D538, K540, and E545.

Belongs to the protein kinase superfamily. Ser/Thr protein kinase family. CDPK subfamily. It depends on Mg(2+) as a cofactor.

It is found in the cytoplasm. It catalyses the reaction L-seryl-[protein] + ATP = O-phospho-L-seryl-[protein] + ADP + H(+). The catalysed reaction is L-threonyl-[protein] + ATP = O-phospho-L-threonyl-[protein] + ADP + H(+). With respect to regulation, activated by calcium. Upon calcium binding to the EF-hand domain 2, the C-terminus of the junction domain (J domain) undergoes a conformational change which results in the dissociation of the pseudo-substrate inhibitory motif from the catalytic domain. This, in turn, may facilitate the autophosphorylation of the activation loop at Thr-271, which leads to the kinase activation. Calcium-dependent protein kinase which acts as a sensor and effector of intracellular Ca(2+) levels probably in part downstream of cGMP-activated PKG kinase. In the mosquito midgut, regulates the gliding motility of the ookinete which is essential for the ookinete to invade the midgut epithelium. However, another study showed that while required for ookinete invasion of the midgut epithelium, is not required for ookinete gliding motility. In Plasmodium berghei (strain Anka), this protein is Calcium-dependent protein kinase 3.